A 732-amino-acid chain; its full sequence is Translation initiation factor IF-2 (732 aa).

Positions 40-147 (PEVVEKLDHT…QQEQPMKKEK (108 aa)) are disordered. Residues 42 to 67 (VVEKLDHTYNKKNERPQASAPKEKQK) show a composition bias toward basic and acidic residues. Positions 90–103 (KVPKKKSANKKKEG) are enriched in basic residues. A compositionally biased stretch (basic and acidic residues) spans 104 to 117 (KKHDLQLQQQEKKI). Residues 118–129 (FHQQKKKIKGKA) show a composition bias toward basic residues. Residues 233–402 (ERPPVVTIMG…LLVSEMEELK (170 aa)) enclose the tr-type G domain. A G1 region spans residues 242-249 (GHVDHGKT). GTP is bound at residue 242-249 (GHVDHGKT). Residues 267 to 271 (GITQH) are G2. The tract at residues 288 to 291 (DTPG) is G3. Residues 288-292 (DTPGH) and 342-345 (NKMD) contribute to the GTP site. The interval 342 to 345 (NKMD) is G4. The tract at residues 378–380 (SAK) is G5.

It belongs to the TRAFAC class translation factor GTPase superfamily. Classic translation factor GTPase family. IF-2 subfamily.

Its subcellular location is the cytoplasm. Functionally, one of the essential components for the initiation of protein synthesis. Protects formylmethionyl-tRNA from spontaneous hydrolysis and promotes its binding to the 30S ribosomal subunits. Also involved in the hydrolysis of GTP during the formation of the 70S ribosomal complex. The sequence is that of Translation initiation factor IF-2 from Geobacillus sp. (strain WCH70).